The sequence spans 212 residues: Protein G1-like7 (212 aa).

Over residues 1-22 the composition is skewed to low complexity; sequence MDPSGPGPSSAAAGGAPAVAAA. Disordered stretches follow at residues 1–34 and 148–212; these read MDPS…RYES and KARG…PSAS. The ALOG domain occupies 31–158; that stretch reads RYESQKRRDW…ARGIPYEKKK (128 aa). A Nuclear localization signal motif is present at residues 156-160; it reads KKKRK. Over residues 173-182 the composition is skewed to low complexity; sequence SGSSSAAAAA. Gly residues predominate over residues 183–194; sequence AGGGDTGSGGGA.

Belongs to the plant homeotic and developmental regulators ALOG protein family.

Its subcellular location is the nucleus. Functionally, probable transcription regulator that acts as a developmental regulator by promoting cell growth in response to light. In Oryza sativa subsp. indica (Rice), this protein is Protein G1-like7.